Reading from the N-terminus, the 753-residue chain is 5-methyltetrahydropteroyltriglutamate--homocysteine methyltransferase (753 aa).

5-methyltetrahydropteroyltri-L-glutamate is bound by residues 17 to 20 (RELK) and Lys-117. Residues 431-433 (IGS) and Glu-484 contribute to the L-homocysteine site. L-methionine contacts are provided by residues 431–433 (IGS) and Glu-484. 5-methyltetrahydropteroyltri-L-glutamate is bound by residues 515 to 516 (RC) and Trp-561. Asp-599 is an L-homocysteine binding site. Position 599 (Asp-599) interacts with L-methionine. Glu-605 is a binding site for 5-methyltetrahydropteroyltri-L-glutamate. Residues His-641, Cys-643, and Glu-665 each contribute to the Zn(2+) site. The active-site Proton donor is His-694. Zn(2+) is bound at residue Cys-726.

The protein belongs to the vitamin-B12 independent methionine synthase family. Zn(2+) serves as cofactor.

The catalysed reaction is 5-methyltetrahydropteroyltri-L-glutamate + L-homocysteine = tetrahydropteroyltri-L-glutamate + L-methionine. The protein operates within amino-acid biosynthesis; L-methionine biosynthesis via de novo pathway; L-methionine from L-homocysteine (MetE route): step 1/1. Its function is as follows. Catalyzes the transfer of a methyl group from 5-methyltetrahydrofolate to homocysteine resulting in methionine formation. This chain is 5-methyltetrahydropteroyltriglutamate--homocysteine methyltransferase, found in Shigella boydii serotype 4 (strain Sb227).